A 125-amino-acid polypeptide reads, in one-letter code: Synaptobrevin (125 aa).

Positions 1-46 are disordered; it reads MSGPQNPQAGPGGPPSGPPQPGGPPGPPQGPPQPVQQSKRLQQTQA. Over 1–103 the chain is Cytoplasmic; that stretch reads MSGPQNPQAG…KRKFWWKNCK (103 aa). Pro residues predominate over residues 12-34; that stretch reads GGPPSGPPQPGGPPGPPQGPPQP. The 61-residue stretch at 40–100 folds into the v-SNARE coiled-coil homology domain; sequence RLQQTQAQVE…GKLKRKFWWK (61 aa). A helical; Anchor for type IV membrane protein membrane pass occupies residues 104-123; that stretch reads MMIILGGIVAVIVTVIIVWA. The Vesicular portion of the chain corresponds to 124-125; sequence AT.

Belongs to the synaptobrevin family.

It localises to the cytoplasmic vesicle. The protein localises to the secretory vesicle. The protein resides in the synaptic vesicle membrane. It is found in the synapse. Its subcellular location is the synaptosome. Its function is as follows. Intrinsic membrane protein of small synaptic vesicles. The chain is Synaptobrevin from Doryteuthis pealeii (Longfin inshore squid).